We begin with the raw amino-acid sequence, 678 residues long: ABC transporter G family member 13 (678 aa).

Positions 10–254 (VAWEDLTVVI…FGEAGFPCPS (245 aa)) constitute an ABC transporter domain. An ATP-binding site is contributed by 48-55 (GPSGSGKS). The ABC transmembrane type-2 domain occupies 355 to 567 (KQLRILTQRS…ALQGAYKNEM (213 aa)). 6 consecutive transmembrane segments (helical) span residues 374 to 394 (YYWM…SIFF), 409 to 429 (CGGF…QSFI), 446 to 466 (VAVY…LMCL), 490 to 510 (LDLI…ASVV), 513 to 533 (FLMG…SAGF), and 602 to 622 (LDLA…FAIL). Position 658 is a phosphoserine (S658).

Belongs to the ABC transporter superfamily. ABCG family. Eye pigment precursor importer (TC 3.A.1.204) subfamily.

It localises to the membrane. The chain is ABC transporter G family member 13 (ABCG13) from Arabidopsis thaliana (Mouse-ear cress).